Reading from the N-terminus, the 355-residue chain is Erythronate-4-phosphate dehydrogenase (355 aa).

Positions 45 and 66 each coordinate substrate. Position 146 (Asp146) interacts with NAD(+). Residue Arg206 is part of the active site. Asp229 is an NAD(+) binding site. Residue Glu234 is part of the active site. His251 acts as the Proton donor in catalysis. NAD(+) is bound at residue Gly254. Tyr255 provides a ligand contact to substrate.

This sequence belongs to the D-isomer specific 2-hydroxyacid dehydrogenase family. PdxB subfamily. As to quaternary structure, homodimer.

The protein localises to the cytoplasm. The enzyme catalyses 4-phospho-D-erythronate + NAD(+) = (R)-3-hydroxy-2-oxo-4-phosphooxybutanoate + NADH + H(+). It functions in the pathway cofactor biosynthesis; pyridoxine 5'-phosphate biosynthesis; pyridoxine 5'-phosphate from D-erythrose 4-phosphate: step 2/5. In terms of biological role, catalyzes the oxidation of erythronate-4-phosphate to 3-hydroxy-2-oxo-4-phosphonooxybutanoate. This is Erythronate-4-phosphate dehydrogenase from Acinetobacter baylyi (strain ATCC 33305 / BD413 / ADP1).